Reading from the N-terminus, the 326-residue chain is DNA-directed RNA polymerase subunit alpha (326 aa).

The segment at 1-231 (MQTNLLKPKI…DQLVVFAALE (231 aa)) is alpha N-terminal domain (alpha-NTD). The tract at residues 247 to 326 (VDPMLMRPVD…ESWPPANLEK (80 aa)) is alpha C-terminal domain (alpha-CTD).

This sequence belongs to the RNA polymerase alpha chain family. As to quaternary structure, homodimer. The RNAP catalytic core consists of 2 alpha, 1 beta, 1 beta' and 1 omega subunit. When a sigma factor is associated with the core the holoenzyme is formed, which can initiate transcription.

The catalysed reaction is RNA(n) + a ribonucleoside 5'-triphosphate = RNA(n+1) + diphosphate. In terms of biological role, DNA-dependent RNA polymerase catalyzes the transcription of DNA into RNA using the four ribonucleoside triphosphates as substrates. This chain is DNA-directed RNA polymerase subunit alpha, found in Polynucleobacter asymbioticus (strain DSM 18221 / CIP 109841 / QLW-P1DMWA-1) (Polynucleobacter necessarius subsp. asymbioticus).